Reading from the N-terminus, the 124-residue chain is ATP synthase epsilon chain (124 aa).

The segment covering 99-118 (LEQAKTEGDAHAERRADVRL) has biased composition (basic and acidic residues). The tract at residues 99–124 (LEQAKTEGDAHAERRADVRLRAAAGR) is disordered.

It belongs to the ATPase epsilon chain family. F-type ATPases have 2 components, CF(1) - the catalytic core - and CF(0) - the membrane proton channel. CF(1) has five subunits: alpha(3), beta(3), gamma(1), delta(1), epsilon(1). CF(0) has three main subunits: a, b and c.

Its subcellular location is the cell membrane. Functionally, produces ATP from ADP in the presence of a proton gradient across the membrane. In Streptomyces coelicolor (strain ATCC BAA-471 / A3(2) / M145), this protein is ATP synthase epsilon chain (atpC).